The sequence spans 447 residues: N-succinylarginine dihydrolase (447 aa).

Residues 19–28 (AGLSFGNEAS), Asn-110, and 137–138 (HR) contribute to the substrate site. The active site involves Glu-174. Arg-212 contributes to the substrate binding site. His-248 is a catalytic residue. Residues Asp-250 and Asn-359 each coordinate substrate. The Nucleophile role is filled by Cys-365.

This sequence belongs to the succinylarginine dihydrolase family. Homodimer.

The catalysed reaction is N(2)-succinyl-L-arginine + 2 H2O + 2 H(+) = N(2)-succinyl-L-ornithine + 2 NH4(+) + CO2. It functions in the pathway amino-acid degradation; L-arginine degradation via AST pathway; L-glutamate and succinate from L-arginine: step 2/5. Functionally, catalyzes the hydrolysis of N(2)-succinylarginine into N(2)-succinylornithine, ammonia and CO(2). This Escherichia coli O9:H4 (strain HS) protein is N-succinylarginine dihydrolase.